Reading from the N-terminus, the 503-residue chain is Aromatase (503 aa).

Transmembrane regions (helical) follow at residues E19 to W39 and M303 to A323. Substrate-binding residues include D309 and M374. C437 serves as a coordination point for heme.

It belongs to the cytochrome P450 family. Requires heme as cofactor. In terms of processing, phosphorylated in vitro by PKA and PKG/PRKG1. These phosphorylations inhibit the catalytic activity as measured by estrone synthesis from androstenedione (36% decrease for PKA and 30% for PKG/PRKG1). In terms of tissue distribution, widely expressed, including in adult and fetal brain, placenta, skin fibroblasts, adipose tissue and gonads.

The protein localises to the endoplasmic reticulum membrane. The protein resides in the microsome membrane. The enzyme catalyses testosterone + 3 reduced [NADPH--hemoprotein reductase] + 3 O2 = 17beta-estradiol + formate + 3 oxidized [NADPH--hemoprotein reductase] + 4 H2O + 4 H(+). The catalysed reaction is androst-4-ene-3,17-dione + 3 reduced [NADPH--hemoprotein reductase] + 3 O2 = estrone + formate + 3 oxidized [NADPH--hemoprotein reductase] + 4 H2O + 4 H(+). It catalyses the reaction androst-4-ene-3,17-dione + reduced [NADPH--hemoprotein reductase] + O2 = 19-hydroxyandrost-4-ene-3,17-dione + oxidized [NADPH--hemoprotein reductase] + H2O + H(+). It carries out the reaction 19-hydroxyandrost-4-ene-3,17-dione + reduced [NADPH--hemoprotein reductase] + O2 = 19-oxo-androst-4-ene-3,17-dione + oxidized [NADPH--hemoprotein reductase] + 2 H2O + H(+). The enzyme catalyses 19-oxo-androst-4-ene-3,17-dione + reduced [NADPH--hemoprotein reductase] + O2 = estrone + formate + oxidized [NADPH--hemoprotein reductase] + H2O + 2 H(+). The catalysed reaction is estrone + reduced [NADPH--hemoprotein reductase] + O2 = 2-hydroxyestrone + oxidized [NADPH--hemoprotein reductase] + H2O + H(+). It catalyses the reaction 17beta-hydroxy-5alpha-androstan-3-one + reduced [NADPH--hemoprotein reductase] + O2 = 17beta,19-dihydroxy-3-oxo-5alpha-androstanone + oxidized [NADPH--hemoprotein reductase] + H2O + H(+). It carries out the reaction 17beta,19-dihydroxy-3-oxo-5alpha-androstanone + reduced [NADPH--hemoprotein reductase] + O2 = 17beta-hydroxy-3,19-dioxo-5alpha-androstanone + oxidized [NADPH--hemoprotein reductase] + 2 H2O + H(+). The enzyme catalyses 17beta-hydroxy-3,19-dioxo-5alpha-androstanone + reduced [NADPH--hemoprotein reductase] + O2 = 17beta-hydroxy-3-oxo-19-nor-5alpha-androst-1-ene + formate + oxidized [NADPH--hemoprotein reductase] + H2O + 2 H(+). It participates in steroid hormone biosynthesis. Its function is as follows. A cytochrome P450 monooxygenase that catalyzes the conversion of C19 androgens, androst-4-ene-3,17-dione (androstenedione) and testosterone to the C18 estrogens, estrone and estradiol, respectively. Catalyzes three successive oxidations of C19 androgens: two conventional oxidations at C19 yielding 19-hydroxy and 19-oxo/19-aldehyde derivatives, followed by a third oxidative aromatization step that involves C1-beta hydrogen abstraction combined with cleavage of the C10-C19 bond to yield a phenolic A ring and formic acid. Alternatively, the third oxidative reaction yields a 19-norsteroid and formic acid. Converts dihydrotestosterone to delta1,10-dehydro 19-nordihydrotestosterone and may play a role in homeostasis of this potent androgen. Also displays 2-hydroxylase activity toward estrone. Mechanistically, uses molecular oxygen inserting one oxygen atom into a substrate, and reducing the second into a water molecule, with two electrons provided by NADPH via cytochrome P450 reductase (CPR; NADPH-ferrihemoprotein reductase). This is Aromatase from Homo sapiens (Human).